The chain runs to 409 residues: Phosphatidylserine decarboxylase proenzyme, mitochondrial (409 aa).

A mitochondrion-targeting transit peptide spans 1–52 (MATSVGHRCLGLLHGVAPWRSSLHPCEITALSQSLQPLRKLPFRAFRTDARK). Topologically, residues 53-63 (IHTAPARTMFL) are mitochondrial matrix. The helical transmembrane segment at 64-82 (LRPVPILLATGGGYAGYRQ) threads the bilayer. Topologically, residues 83-409 (YEKYRERELE…IRFGEALGSL (327 aa)) are mitochondrial intermembrane. Residues aspartate 191, histidine 267, and serine 378 each act as charge relay system; for autoendoproteolytic cleavage activity in the active site. Catalysis depends on serine 378, which acts as the Schiff-base intermediate with substrate; via pyruvic acid; for decarboxylase activity. At serine 378 the chain carries Pyruvic acid (Ser); by autocatalysis.

The protein belongs to the phosphatidylserine decarboxylase family. PSD-B subfamily. Eukaryotic type I sub-subfamily. As to quaternary structure, heterodimer of a large membrane-associated beta subunit and a small pyruvoyl-containing alpha subunit. Pyruvate is required as a cofactor. Post-translationally, is synthesized initially as an inactive proenzyme. Formation of the active enzyme involves a self-maturation process in which the active site pyruvoyl group is generated from an internal serine residue via an autocatalytic post-translational modification. Two non-identical subunits are generated from the proenzyme in this reaction, and the pyruvate is formed at the N-terminus of the alpha chain, which is derived from the carboxyl end of the proenzyme. The autoendoproteolytic cleavage occurs by a canonical serine protease mechanism, in which the side chain hydroxyl group of the serine supplies its oxygen atom to form the C-terminus of the beta chain, while the remainder of the serine residue undergoes an oxidative deamination to produce ammonia and the pyruvoyl prosthetic group on the alpha chain. During this reaction, the Ser that is part of the protease active site of the proenzyme becomes the pyruvoyl prosthetic group, which constitutes an essential element of the active site of the mature decarboxylase.

It localises to the mitochondrion inner membrane. The protein resides in the lipid droplet. The protein localises to the cytoplasm. It carries out the reaction a 1,2-diacyl-sn-glycero-3-phospho-L-serine + H(+) = a 1,2-diacyl-sn-glycero-3-phosphoethanolamine + CO2. It participates in phospholipid metabolism; phosphatidylethanolamine biosynthesis. In terms of biological role, catalyzes the formation of phosphatidylethanolamine (PtdEtn) from phosphatidylserine (PtdSer). Plays a central role in phospholipid metabolism and in the interorganelle trafficking of phosphatidylserine. May be involved in lipid droplet biogenesis at the endoplasmic reticulum membrane. The protein is Phosphatidylserine decarboxylase proenzyme, mitochondrial of Pongo abelii (Sumatran orangutan).